A 337-amino-acid chain; its full sequence is ERI1 exoribonuclease 3 (337 aa).

Residues 146–320 (FLVLDFEATC…DDCKNIANIM (175 aa)) enclose the Exonuclease domain. Mg(2+) is bound by residues Asp-150, Glu-152, and Asp-249. Residue Glu-152 is the Proton acceptor of the active site. Glu-152 serves as a coordination point for AMP. The active-site Proton acceptor is the His-307. His-307 contacts AMP. Residue Asp-312 participates in Mg(2+) binding.

In terms of assembly, interacts with PRNP. Requires Mg(2+) as cofactor.

The sequence is that of ERI1 exoribonuclease 3 (ERI3) from Homo sapiens (Human).